The primary structure comprises 100 residues: MARKGLIQREKKRQKLEQKYHLIRRSSKKEISKVQSLNDKWEIYRKLQSPPRNSAPTRLHRRCFATGRPRANYRDFGLSGHILREMVHACLLPGARRSSW.

Belongs to the universal ribosomal protein uS14 family. In terms of assembly, part of the 30S ribosomal subunit.

Its subcellular location is the plastid. It localises to the chloroplast. Its function is as follows. Binds 16S rRNA, required for the assembly of 30S particles. This is Small ribosomal subunit protein uS14c from Coffea arabica (Arabian coffee).